A 140-amino-acid polypeptide reads, in one-letter code: Large ribosomal subunit protein bL17 (140 aa).

The protein belongs to the bacterial ribosomal protein bL17 family. As to quaternary structure, part of the 50S ribosomal subunit. Contacts protein L32.

This is Large ribosomal subunit protein bL17 from Beijerinckia indica subsp. indica (strain ATCC 9039 / DSM 1715 / NCIMB 8712).